Reading from the N-terminus, the 505-residue chain is Probable amino-acid permease PB1C11.02 (505 aa).

The next 11 membrane-spanning stretches (helical) occupy residues Met25–Ala45, Ala50–Leu70, Ile149–Gly169, Tyr175–Cys195, Ile221–Ile241, Val266–Pro286, Phe305–Ala325, Gly357–Ser377, Trp383–Val403, Asn425–Leu445, and Leu456–Trp476.

Belongs to the amino acid-polyamine-organocation (APC) superfamily.

The protein localises to the membrane. The chain is Probable amino-acid permease PB1C11.02 from Schizosaccharomyces pombe (strain 972 / ATCC 24843) (Fission yeast).